The chain runs to 495 residues: Protein SLENDER RICE1-LIKE 1 (495 aa).

In terms of domain architecture, GRAS spans 77 to 449 (EEEEVAGIRL…RPLFSASAWE (373 aa)). The tract at residues 84–140 (IRLVHLLMSCAGAIEAGDHALASAQLADSHAALAAVSAASGIGRVAVHFTTALSRRL) is leucine repeat I (LRI). A VHIID region spans residues 158 to 223 (YHHFYEACPY…GGPPFLRITG (66 aa)). The VHIID motif lies at 189–193 (VHVID). Residues 237 to 269 (DVGLRLADLARSVRVRFSFRGVAANSLDEVRPW) are leucine repeat II (LRII). Residues 279–371 (VAFNSVLQLH…EAYLQREICD (93 aa)) are PFYRE. Positions 287-291 (LHRLL) match the LXXLL motif motif. The tract at residues 374–449 (CGEGAARRER…RPLFSASAWE (76 aa)) is SAW. Residues 451–495 (AGDGGGDNNNNSNSNVSGSSGSDSNNSGSSNGKSSGARDGSSVCL) are disordered. Residues 458-485 (NNNNSNSNVSGSSGSDSNNSGSSNGKSS) are compositionally biased toward low complexity.

This sequence belongs to the GRAS family. In terms of tissue distribution, expressed in elongating internodes and flowers. Expressed in floral meristem, stamen primordia and tapetum in developing anthers. Expressed at low levels in roots, shoot apices and rachis.

It localises to the nucleus. Its function is as follows. Probable transcriptional regulator that acts as a repressor of the gibberellin (GA) signaling pathway. Its repressive activity is weaker than that of SLR1. Its overexpression prevents the GA signaling pathway and induces a dwarf phenotype. This Oryza sativa subsp. japonica (Rice) protein is Protein SLENDER RICE1-LIKE 1.